A 121-amino-acid chain; its full sequence is Large ribosomal subunit protein uL14 (121 aa).

It belongs to the universal ribosomal protein uL14 family. As to quaternary structure, part of the 50S ribosomal subunit. Forms a cluster with proteins L3 and L19. In the 70S ribosome, L14 and L19 interact and together make contacts with the 16S rRNA in bridges B5 and B8.

Its function is as follows. Binds to 23S rRNA. Forms part of two intersubunit bridges in the 70S ribosome. In Prochlorococcus marinus (strain MIT 9301), this protein is Large ribosomal subunit protein uL14.